Here is a 96-residue protein sequence, read N- to C-terminus: Co-chaperonin GroES (96 aa).

The protein belongs to the GroES chaperonin family. In terms of assembly, heptamer of 7 subunits arranged in a ring. Interacts with the chaperonin GroEL.

The protein localises to the cytoplasm. Its function is as follows. Together with the chaperonin GroEL, plays an essential role in assisting protein folding. The GroEL-GroES system forms a nano-cage that allows encapsulation of the non-native substrate proteins and provides a physical environment optimized to promote and accelerate protein folding. GroES binds to the apical surface of the GroEL ring, thereby capping the opening of the GroEL channel. The sequence is that of Co-chaperonin GroES from Haemophilus influenzae (strain PittGG).